The primary structure comprises 507 residues: Cytochrome P450 monooxygenase tpeC (507 aa).

The helical transmembrane segment at 24-44 (TLAIALIVGFVILKAIYNVFF) threads the bilayer. A heme-binding site is contributed by Cys449.

This sequence belongs to the cytochrome P450 family. The cofactor is heme.

It is found in the membrane. It functions in the pathway secondary metabolite biosynthesis. Cytochrome P450 monooxygenase; part of the gene cluster that mediates the biosynthesis of polyesters containing 2,4-dihydroxy-6-(2-hydroxypropyl)benzoate and 3-hydroxybutyrate moieties, such as talapolyester G, 15G256beta and 15G256beta-2; as well as to oxidized derivatives such as 15G256alpha. The biosynthesis of the polyesters probably starts with the formation of the diketide 3-hydroxybutyryl-S-ACP catalyzed by the partially reducing polyketide synthase tpeA. The acceptance of 3-hydroxybutyryl by the non-reducing polyketide synthase tpeB would initiate further elongation and cyclization, catalyzed by KS and PT, respectively, to form 2,4-dihydroxy-6-(2-hydroxyn-propyl)benzoyl-S-ACP intermediate. The TE domain could catalyze lactonization at this step to yield 6-hydroxymellein as a derailment product. The polyesterification process maybe occurs when additional molecules of 3-hydroxybutyryl are transferred to tpeB. Following the first esterification step, an intramolecular cyclization catalyzed by the TE domain of tpeB would give talarodioxadione 1, whereas the ethyl esterification of talapolyester G perhaps happens spontaneously. Further oxidation by the cytochrome P450 monooxygenase tpeC then leads to the formation of oxidized derivatives. The polypeptide is Cytochrome P450 monooxygenase tpeC (Talaromyces stipitatus (strain ATCC 10500 / CBS 375.48 / QM 6759 / NRRL 1006) (Penicillium stipitatum)).